A 381-amino-acid chain; its full sequence is Alkanesulfonate monooxygenase (381 aa).

The protein belongs to the SsuD family. As to quaternary structure, homotetramer.

The catalysed reaction is an alkanesulfonate + FMNH2 + O2 = an aldehyde + FMN + sulfite + H2O + 2 H(+). Catalyzes the desulfonation of aliphatic sulfonates. This chain is Alkanesulfonate monooxygenase, found in Escherichia coli O1:K1 / APEC.